A 363-amino-acid chain; its full sequence is DNA polymerase IV (363 aa).

Positions I14–G197 constitute a UmuC domain. The Mg(2+) site is built by D18 and D115. Residue E116 is part of the active site.

It belongs to the DNA polymerase type-Y family. As to quaternary structure, monomer. It depends on Mg(2+) as a cofactor.

Its subcellular location is the cytoplasm. The catalysed reaction is DNA(n) + a 2'-deoxyribonucleoside 5'-triphosphate = DNA(n+1) + diphosphate. Functionally, poorly processive, error-prone DNA polymerase involved in untargeted mutagenesis. Copies undamaged DNA at stalled replication forks, which arise in vivo from mismatched or misaligned primer ends. These misaligned primers can be extended by PolIV. Exhibits no 3'-5' exonuclease (proofreading) activity. May be involved in translesional synthesis, in conjunction with the beta clamp from PolIII. This Lactococcus lactis subsp. lactis (strain IL1403) (Streptococcus lactis) protein is DNA polymerase IV.